A 99-amino-acid chain; its full sequence is DNA-binding protein HU (99 aa).

The segment at 67–86 (REGRNPKTGAKMKIDAYNQP) is disordered.

This sequence belongs to the bacterial histone-like protein family. Homodimer.

Histone-like DNA-binding protein which is capable of wrapping DNA to stabilize it, and thus to prevent its denaturation under extreme environmental conditions. The protein is DNA-binding protein HU (hup) of Rickettsia felis (strain ATCC VR-1525 / URRWXCal2) (Rickettsia azadi).